A 596-amino-acid chain; its full sequence is Ferredoxin--nitrite reductase, chloroplastic (596 aa).

Residues Met1–Arg28 constitute a chloroplast transit peptide. Positions Met1–Leu56 are disordered. Positions Pro31–Ala47 are enriched in low complexity. The [4Fe-4S] cluster site is built by Cys474, Cys480, Cys515, and Cys519. Siroheme is bound at residue Cys519.

It belongs to the nitrite and sulfite reductase 4Fe-4S domain family. In terms of assembly, monomer. Requires siroheme as cofactor. The cofactor is [4Fe-4S] cluster.

The protein localises to the plastid. It is found in the chloroplast. The catalysed reaction is 6 oxidized [2Fe-2S]-[ferredoxin] + NH4(+) + 2 H2O = nitrite + 6 reduced [2Fe-2S]-[ferredoxin] + 8 H(+). The protein operates within nitrogen metabolism; nitrate reduction (assimilation). Functionally, catalyzes the six-electron reduction of nitrite to ammonium. The sequence is that of Ferredoxin--nitrite reductase, chloroplastic from Oryza sativa subsp. japonica (Rice).